Here is a 324-residue protein sequence, read N- to C-terminus: Biotin synthase (324 aa).

Positions 37–264 (NEVQVAALMN…ASYVRLAAGR (228 aa)) constitute a Radical SAM core domain. [4Fe-4S] cluster contacts are provided by Cys52, Cys56, and Cys59. Residues Cys96, Cys127, Cys187, and Arg259 each coordinate [2Fe-2S] cluster.

It belongs to the radical SAM superfamily. Biotin synthase family. Homodimer. It depends on [4Fe-4S] cluster as a cofactor. [2Fe-2S] cluster is required as a cofactor.

The catalysed reaction is (4R,5S)-dethiobiotin + (sulfur carrier)-SH + 2 reduced [2Fe-2S]-[ferredoxin] + 2 S-adenosyl-L-methionine = (sulfur carrier)-H + biotin + 2 5'-deoxyadenosine + 2 L-methionine + 2 oxidized [2Fe-2S]-[ferredoxin]. The protein operates within cofactor biosynthesis; biotin biosynthesis; biotin from 7,8-diaminononanoate: step 2/2. Its function is as follows. Catalyzes the conversion of dethiobiotin (DTB) to biotin by the insertion of a sulfur atom into dethiobiotin via a radical-based mechanism. This Anaplasma marginale (strain Florida) protein is Biotin synthase.